A 609-amino-acid polypeptide reads, in one-letter code: Indole-3-acetic acid-amido synthetase GH3.17 (609 aa).

The protein belongs to the IAA-amido conjugating enzyme family.

Catalyzes the synthesis of indole-3-acetic acid (IAA)-amino acid conjugates, providing a mechanism for the plant to cope with the presence of excess auxin. Strongly reactive with Glu, Gln, Trp, Asp, Ala, Leu, Phe, Gly, Tyr, Met, Ile and Val. Appears to favor Glu over Asp while the other GH3 favor Asp over Glu. Little or no product formation with His, Ser, Thr, Arg, Lys, or Cys. Also active on pyruvic and butyric acid analogs of IAA, PAA and the synthetic auxin naphthaleneacetic acid (NAA). The two chlorinated synthetic auxin herbicides 2,4-D and 3,6-dichloro-o-anisic acid (dicamba) cannot be used as substrates. The chain is Indole-3-acetic acid-amido synthetase GH3.17 (GH3.17) from Arabidopsis thaliana (Mouse-ear cress).